The primary structure comprises 137 residues: Small ribosomal subunit protein uS12 (137 aa).

Disordered regions lie at residues Met-1–Pro-22 and Lys-37–Lys-57. Basic residues predominate over residues Arg-9–Ser-19. Residue Asp-102 is modified to 3-methylthioaspartic acid.

The protein belongs to the universal ribosomal protein uS12 family. In terms of assembly, part of the 30S ribosomal subunit. Contacts proteins S8 and S17. May interact with IF1 in the 30S initiation complex.

Its function is as follows. With S4 and S5 plays an important role in translational accuracy. Functionally, interacts with and stabilizes bases of the 16S rRNA that are involved in tRNA selection in the A site and with the mRNA backbone. Located at the interface of the 30S and 50S subunits, it traverses the body of the 30S subunit contacting proteins on the other side and probably holding the rRNA structure together. The combined cluster of proteins S8, S12 and S17 appears to hold together the shoulder and platform of the 30S subunit. In Limosilactobacillus fermentum (strain NBRC 3956 / LMG 18251) (Lactobacillus fermentum), this protein is Small ribosomal subunit protein uS12.